The primary structure comprises 240 residues: Tubulin alpha chain (240 aa).

Asn17 lines the GTP pocket. Glu43 is an active-site residue.

Belongs to the tubulin family. Dimer of alpha and beta chains. A typical microtubule is a hollow water-filled tube with an outer diameter of 25 nm and an inner diameter of 15 nM. Alpha-beta heterodimers associate head-to-tail to form protofilaments running lengthwise along the microtubule wall with the beta-tubulin subunit facing the microtubule plus end conferring a structural polarity. Microtubules usually have 13 protofilaments but different protofilament numbers can be found in some organisms and specialized cells. Requires Mg(2+) as cofactor. Post-translationally, undergoes a tyrosination/detyrosination cycle, the cyclic removal and re-addition of a C-terminal tyrosine residue by the enzymes tubulin tyrosine carboxypeptidase (TTCP) and tubulin tyrosine ligase (TTL), respectively.

It localises to the cytoplasm. The protein resides in the cytoskeleton. It carries out the reaction GTP + H2O = GDP + phosphate + H(+). In terms of biological role, tubulin is the major constituent of microtubules, a cylinder consisting of laterally associated linear protofilaments composed of alpha- and beta-tubulin heterodimers. Microtubules grow by the addition of GTP-tubulin dimers to the microtubule end, where a stabilizing cap forms. Below the cap, tubulin dimers are in GDP-bound state, owing to GTPase activity of alpha-tubulin. This Octopus vulgaris (Common octopus) protein is Tubulin alpha chain.